The chain runs to 88 residues: Phosphocarrier protein HPr (88 aa).

An HPr domain is found at 1–88 (MKTQQFTVID…TLLTEMGLAQ (88 aa)). His15 (pros-phosphohistidine intermediate) is an active-site residue. Position 46 is a phosphoserine; by HPrK/P (Ser46).

Belongs to the HPr family.

It localises to the cytoplasm. Its activity is regulated as follows. Phosphorylation on Ser-46 inhibits the phosphoryl transfer from enzyme I to HPr. Functionally, general (non sugar-specific) component of the phosphoenolpyruvate-dependent sugar phosphotransferase system (sugar PTS). This major carbohydrate active-transport system catalyzes the phosphorylation of incoming sugar substrates concomitantly with their translocation across the cell membrane. The phosphoryl group from phosphoenolpyruvate (PEP) is transferred to the phosphoryl carrier protein HPr by enzyme I. Phospho-HPr then transfers it to the PTS EIIA domain. Its function is as follows. P-Ser-HPr interacts with the catabolite control protein A (CcpA), forming a complex that binds to DNA at the catabolite response elements cre, operator sites preceding a large number of catabolite-regulated genes. Thus, P-Ser-HPr is a corepressor in carbon catabolite repression (CCR), a mechanism that allows bacteria to coordinate and optimize the utilization of available carbon sources. P-Ser-HPr also plays a role in inducer exclusion, in which it probably interacts with several non-PTS permeases and inhibits their transport activity. This chain is Phosphocarrier protein HPr (ptsH), found in Lysinibacillus sphaericus (Bacillus sphaericus).